We begin with the raw amino-acid sequence, 2543 residues long: Highly reducing polyketide synthase GPY1 (2543 aa).

The region spanning 9–435 is the Ketosynthase family 3 (KS3) domain; it reads REPIAIVSMA…GSTAHAVVEF (427 aa). Active-site for beta-ketoacyl synthase activity residues include Cys182, His318, and His358. The segment at 574 to 881 is malonyl-CoA:ACP transacylase (MAT) domain; it reads TFTGQGAMWS…PFFATMLRNA (308 aa). Residues 953-1089 are N-terminal hotdog fold; it reads HEILGSRCRG…GRAAVLETSK (137 aa). A dehydratase (DH) domain region spans residues 953–1253; sequence HEILGSRCRG…GLQMDRATSD (301 aa). The 304-residue stretch at 953–1256 folds into the PKS/mFAS DH domain; it reads HEILGSRCRG…MDRATSDDNT (304 aa). The active-site Proton acceptor; for dehydratase activity is the His985. The interval 1103 to 1256 is C-terminal hotdog fold; that stretch reads MPLKVPLKSY…MDRATSDDNT (154 aa). The active-site Proton donor; for dehydratase activity is Asp1169. Residues 1399-1587 are methyltransferase (CMet) domain; the sequence is NDLLYRFYEE…LDEWRNELAA (189 aa). Residues 1830 to 2136 are enoyl reductase (ER) domain; sequence GILESLTMAQ…IEGTSNKQVV (307 aa). Positions 2161–2335 are ketoreductase (KR) domain; the sequence is TYIITGGLGG…ASSVDLGFVE (175 aa). A Carrier domain is found at 2464–2541; that stretch reads ALQPFVCTAL…DLSARVSRMI (78 aa). Ser2501 carries the post-translational modification O-(pantetheine 4'-phosphoryl)serine.

Highly reducing polyketide synthase; part of the gene cluster that mediates the biosynthesis of gibepyrone A, a 2H-pyran-2-one metabolite exhibiting a moderate antimicrobial activity against Gram-positive bacteria and yeasts. The highly reducing polyketide synthase GPY1 is sufficient to produce gibepyrone A. GPY1 uses an acetyl-CoA starter unit, three malonyl-CoA extender units, and two SAM-dependent methylations to establish the gibepyrone A carbon backbone, followed by product release upon intramolecular cyclization. The gibepyrone A derivatives gibepyrones B and D are produced by cluster-independent P450 monooxygenases, probably to protect the fungus from the toxic product. In contrast, the formation of gibepyrones E and F from gibepyrone A is a spontaneous process and independent of enzymatic activity. The protein is Highly reducing polyketide synthase GPY1 of Gibberella fujikuroi (strain CBS 195.34 / IMI 58289 / NRRL A-6831) (Bakanae and foot rot disease fungus).